Consider the following 1083-residue polypeptide: Glutamate receptor-interacting protein 2 (1083 aa).

3 PDZ domains span residues 58 to 141, 156 to 244, and 258 to 342; these read IVEL…EYEL, TIEI…EYDV, and LVEI…LPAH. Residues 408–422 are compositionally biased toward polar residues; it reads AGTPGFSSQNSNTLP. Residues 408 to 460 form a disordered region; sequence AGTPGFSSQNSNTLPRTVHPMSPRTTMNRRRQKRKDHKSSLSLASSTVGPGGQ. The segment covering 434-444 has biased composition (basic residues); the sequence is MNRRRQKRKDH. PDZ domains follow at residues 468 to 555, 569 to 652, and 667 to 749; these read EIIL…EIEF, HVKL…RKDE, and TVEL…KKQT. 3 disordered regions span residues 754-783, 853-872, and 936-965; these read PQRL…LSEI, NEQD…GLET, and GSHH…VHNA. Over residues 774-783 the composition is skewed to polar residues; sequence SQKTSKLSEI. Over residues 945-963 the composition is skewed to basic and acidic residues; that stretch reads PKKENKLSQDARSKKEEVH. Residues 974–1056 enclose the PDZ 7 domain; it reads KVTVQKDMDT…RLDLVISRGL (83 aa).

Belongs to the GRIP2 family. Enriched in the mitochondrial cloud of stage I oocytes, before becoming concentrated at the tip of the vegetal cortex in stage II oocytes. Expression becomes localized to the germ plasm of stage III-IV oocytes and early cleavage stages. At the tailbud stage, localizes to the migrating primordial germ cells (PGCs) until PGC migration is complete (stage 40), at which point expression disappears. In the adult, expressed in the brain, ovary, eye, muscle, spinal cord and very weakly in adipocytes.

Its subcellular location is the cytoplasm. In terms of biological role, plays an important role in primordial germ cell (PGC) maintenance and efficiency of PGC migration. This chain is Glutamate receptor-interacting protein 2, found in Xenopus laevis (African clawed frog).